The chain runs to 529 residues: Peptide chain release factor 3 (529 aa).

The tr-type G domain maps to 11-280; the sequence is AKRRTFAIIS…GLVAWAPAPM (270 aa). GTP is bound by residues 20–27, 88–92, and 142–145; these read SHPDAGKT, DTPGH, and NKLD.

This sequence belongs to the TRAFAC class translation factor GTPase superfamily. Classic translation factor GTPase family. PrfC subfamily.

Its subcellular location is the cytoplasm. Increases the formation of ribosomal termination complexes and stimulates activities of RF-1 and RF-2. It binds guanine nucleotides and has strong preference for UGA stop codons. It may interact directly with the ribosome. The stimulation of RF-1 and RF-2 is significantly reduced by GTP and GDP, but not by GMP. The sequence is that of Peptide chain release factor 3 from Salmonella gallinarum (strain 287/91 / NCTC 13346).